A 568-amino-acid chain; its full sequence is Sulfite reductase [NADPH] hemoprotein beta-component (568 aa).

[4Fe-4S] cluster-binding residues include Cys-426, Cys-432, Cys-471, and Cys-475. Residue Cys-475 coordinates siroheme.

Belongs to the nitrite and sulfite reductase 4Fe-4S domain family. In terms of assembly, alpha(8)-beta(8). The alpha component is a flavoprotein, the beta component is a hemoprotein. Siroheme is required as a cofactor. It depends on [4Fe-4S] cluster as a cofactor.

The catalysed reaction is hydrogen sulfide + 3 NADP(+) + 3 H2O = sulfite + 3 NADPH + 4 H(+). Its pathway is sulfur metabolism; hydrogen sulfide biosynthesis; hydrogen sulfide from sulfite (NADPH route): step 1/1. In terms of biological role, component of the sulfite reductase complex that catalyzes the 6-electron reduction of sulfite to sulfide. This is one of several activities required for the biosynthesis of L-cysteine from sulfate. In Xylella fastidiosa (strain 9a5c), this protein is Sulfite reductase [NADPH] hemoprotein beta-component.